Here is a 759-residue protein sequence, read N- to C-terminus: LON peptidase N-terminal domain and RING finger protein 3 (759 aa).

The tract at residues 1–69 (MESVRIEQML…PGTSTPESKV (69 aa)) is disordered. The segment covering 57–66 (EQSPGTSTPE) has biased composition (polar residues). The stretch at 67 to 100 (SKVLLTQADALASRGRIREALEVYRQLSERQQLV) is one TPR 1 repeat. Residues 158-196 (CRKCHGFLSDPVSLSCGHTFCKLCLERGRAADRRCALCG) form an RING-type 1 zinc finger. TPR repeat units follow at residues 243 to 276 (ASQL…APND), 278 to 310 (LLYS…RPMG), and 312 to 344 (KAHF…DGKN). The tract at residues 360 to 454 (HCSSQEEAAA…TDQGDKPALS (95 aa)) is disordered. The segment covering 380 to 393 (AKVKGDGQQHHMKD) has biased composition (basic and acidic residues). The RING-type 2 zinc-finger motif lies at 467-505 (CALCMRLFYEPVTTPCGHTFCLKCLERCLDHNAKCPLCK). A Lon N-terminal domain is found at 546–755 (MEELSNLNKN…GIRRVLAFIS (210 aa)).

The protein is LON peptidase N-terminal domain and RING finger protein 3 (LONRF3) of Homo sapiens (Human).